We begin with the raw amino-acid sequence, 1220 residues long: Cullin-associated NEDD8-dissociated protein 1 (1220 aa).

HEAT repeat units follow at residues 1–35 (MEEG…DANH), 42–79 (ESFP…KIPQ), 121–157 (FYTS…SLEI), 259–295 (ADYT…YQQV), 365–410 (LSRL…HVPR), 615–650 (IFLR…SVTD), 680–700 (TTAY…YLAE), 701–737 (SLLE…SILL), 738–775 (KSKN…VISK), 810–847 (FQSK…DYGK), 850–887 (LPAN…QSEK), and 1020–1057 (EVSQ…KSSV).

The protein belongs to the CAND family.

Its subcellular location is the nucleus. In terms of biological role, key assembly factor of SCF (SKP1-CUL1-F-box protein) E3 ubiquitin ligase complexes that promotes the exchange of the substrate-recognition F-box subunit in SCF complexes, thereby playing a key role in the cellular repertoire of SCF complexes. Acts as a F-box protein exchange factor. This Schizosaccharomyces pombe (strain 972 / ATCC 24843) (Fission yeast) protein is Cullin-associated NEDD8-dissociated protein 1 (knd1).